Here is a 1128-residue protein sequence, read N- to C-terminus: Apoptosis-stimulating of p53 protein 2 (1128 aa).

Disordered stretches follow at residues 86 to 106 (PGRDIVSGPRSQDPSLKRNGV) and 322 to 341 (KENLPVSSDGNLPQQAASAP). Polar residues predominate over residues 322–339 (KENLPVSSDGNLPQQAAS). Residues 332–348 (NLPQQAASAPSRVAAVG) form an interaction with APPBP1 region. Position 480 is a phosphoserine (Ser480). 2 disordered regions span residues 494–598 (NVAK…LPPF) and 655–706 (NQQQ…LPFL). Residues 528-537 (GSSQQLSTVV) are compositionally biased toward polar residues. Phosphoserine occurs at positions 556, 569, 572, and 576. The span at 558 to 575 (SIPSVGQDQTLSPGSKQE) shows a compositional bias: polar residues. Over residues 655-670 (NQQQHPENIYSNSQGK) the composition is skewed to polar residues. Ser698, Ser714, and Ser737 each carry phosphoserine. 2 disordered regions span residues 724 to 748 (KLSNAPRPLKKRSSITEPEGPNGPN) and 802 to 909 (SLVP…TNLR). A compositionally biased stretch (low complexity) spans 840 to 849 (NSPNLQNNPE). An SH3-binding motif is present at residues 866–875 (YPPYPPPPYP). Residues 867–876 (PPYPPPPYPS) show a composition bias toward pro residues. The tract at residues 876–1128 (SGEPEGPGED…RIKPRQRSLA (253 aa)) is mediates interaction with APC2. ANK repeat units lie at residues 926–957 (PLALLLDSSLEGEFDLVQRIIYEVDDPSLPND), 958–990 (EGITALHNAVCAGHTEIVKFLVQFGVNVNAADS), 991–1024 (DGWTPLHCAASCNNVQVCKFLVESGAAVFAMTYS), and 1025–1067 (DMQT…ALWD). The SH3 domain maps to 1057 to 1119 (MNKGVIYALW…PRNLLGLYPR (63 aa)).

This sequence belongs to the ASPP family. In terms of assembly, interacts with P53/TP53; the interaction promotes pro-apoptotic activity. Interacts with BCL2. Interacts with protein phosphatase 1. Interacts with RELA NF-kappa-B subunit. This interaction probably prevents the activation of apoptosis, possibly by preventing its interaction with TP53. Interacts with APC2 and NAE1. Interacts with DDX42 (via the C-terminus); the interaction is not inhibited by TP53BP2 ubiquitination and is independent of p53/TP53. Widely expressed. Expressed in spleen, thymus, prostate, testis, ovary, small intestine, colon and peripheral blood leukocyte. Reduced expression in breast carcinomas expressing a wild-type TP53 protein. Overexpressed in lung cancer cell lines.

It is found in the cytoplasm. The protein localises to the perinuclear region. Its subcellular location is the nucleus. Functionally, regulator that plays a central role in regulation of apoptosis and cell growth via its interactions with proteins such as TP53. Regulates TP53 by enhancing the DNA binding and transactivation function of TP53 on the promoters of proapoptotic genes in vivo. Inhibits the ability of NAE1 to conjugate NEDD8 to CUL1, and thereby decreases NAE1 ability to induce apoptosis. Impedes cell cycle progression at G2/M. Its apoptosis-stimulating activity is inhibited by its interaction with DDX42. This is Apoptosis-stimulating of p53 protein 2 (TP53BP2) from Homo sapiens (Human).